Consider the following 458-residue polypeptide: cAMP-dependent protein kinase regulatory subunit (458 aa).

The dimerization and phosphorylation stretch occupies residues 28 to 222 (QFAANYFNKK…GLESAVGKNF (195 aa)). At S184 the chain carries Phosphoserine. Residues 223–338 (LFNK…FLKS), E288, R297, 341–457 (LLKS…RADK), E407, and R416 contribute to the 3',5'-cyclic AMP site.

It belongs to the cAMP-dependent kinase regulatory chain family. Tetramer, composed of 2 regulatory (R) and 2 catalytic (C) subunits. In the presence of cAMP it dissociates into 2 active monomeric C subunits and an R dimer.

The sequence is that of cAMP-dependent protein kinase regulatory subunit (PKAR) from Eremothecium gossypii (strain ATCC 10895 / CBS 109.51 / FGSC 9923 / NRRL Y-1056) (Yeast).